Consider the following 65-residue polypeptide: Small ribosomal subunit protein bS21 (65 aa).

The protein belongs to the bacterial ribosomal protein bS21 family.

The protein is Small ribosomal subunit protein bS21 of Chlorobium limicola (strain DSM 245 / NBRC 103803 / 6330).